Here is a 516-residue protein sequence, read N- to C-terminus: Probable cyclic di-GMP phosphodiesterase PdeB (516 aa).

A run of 2 helical transmembrane segments spans residues 6–26 (LVGL…GLSI) and 242–262 (QVFI…MFVL). One can recognise an EAL domain in the interval 268–516 (IQSPHHRLQD…DFLRWAEQHL (249 aa)).

It is found in the cell inner membrane. The catalysed reaction is 3',3'-c-di-GMP + H2O = 5'-phosphoguanylyl(3'-&gt;5')guanosine + H(+). In terms of biological role, phosphodiesterase (PDE) that catalyzes the hydrolysis of cyclic-di-GMP (c-di-GMP) to 5'-pGpG. The protein is Probable cyclic di-GMP phosphodiesterase PdeB of Escherichia coli (strain K12).